We begin with the raw amino-acid sequence, 180 residues long: Large ribosomal subunit protein uL18m (180 aa).

Belongs to the universal ribosomal protein uL18 family. As to quaternary structure, component of the mitochondrial ribosome large subunit (39S) which comprises a 16S rRNA and about 50 distinct proteins.

The protein resides in the mitochondrion. In terms of biological role, together with thiosulfate sulfurtransferase (TST), acts as a mitochondrial import factor for the cytosolic 5S rRNA. The precursor form shows RNA chaperone activity; is able to fold the 5S rRNA into an import-competent conformation that is recognized by rhodanese (TST). Both the cytoplasmic and mitochondrial forms are able to bind to the helix IV-loop D in the gamma domain of the 5S rRNA. The polypeptide is Large ribosomal subunit protein uL18m (MRPL18) (Bos taurus (Bovine)).